The sequence spans 200 residues: GTP cyclohydrolase-2 (200 aa).

50–54 is a GTP binding site; the sequence is RVHSE. Residues cysteine 55, cysteine 66, and cysteine 68 each contribute to the Zn(2+) site. GTP-binding positions include glutamine 71, 93–95, and threonine 115; that span reads EGR. Aspartate 127 (proton acceptor) is an active-site residue. Arginine 129 acts as the Nucleophile in catalysis. The GTP site is built by threonine 150 and lysine 155.

The protein belongs to the GTP cyclohydrolase II family. The cofactor is Zn(2+).

It catalyses the reaction GTP + 4 H2O = 2,5-diamino-6-hydroxy-4-(5-phosphoribosylamino)-pyrimidine + formate + 2 phosphate + 3 H(+). The protein operates within cofactor biosynthesis; riboflavin biosynthesis; 5-amino-6-(D-ribitylamino)uracil from GTP: step 1/4. Its function is as follows. Catalyzes the conversion of GTP to 2,5-diamino-6-ribosylamino-4(3H)-pyrimidinone 5'-phosphate (DARP), formate and pyrophosphate. The sequence is that of GTP cyclohydrolase-2 from Acinetobacter baumannii (strain SDF).